Consider the following 472-residue polypeptide: Glutamate--tRNA ligase 1 (472 aa).

The short motif at 9–19 is the 'HIGH' region element; the sequence is PSPTGLLHVGN. Basic and acidic residues predominate over residues 112 to 131; the sequence is AMAEKRPPRYDGTWRDRDPS. The interval 112-133 is disordered; that stretch reads AMAEKRPPRYDGTWRDRDPSEA. Residues 238–242 carry the 'KMSKS' region motif; the sequence is KLSKR. Position 241 (Lys-241) interacts with ATP.

Belongs to the class-I aminoacyl-tRNA synthetase family. Glutamate--tRNA ligase type 1 subfamily. Monomer.

It localises to the cytoplasm. It catalyses the reaction tRNA(Glu) + L-glutamate + ATP = L-glutamyl-tRNA(Glu) + AMP + diphosphate. Its function is as follows. Catalyzes the attachment of glutamate to tRNA(Glu) in a two-step reaction: glutamate is first activated by ATP to form Glu-AMP and then transferred to the acceptor end of tRNA(Glu). In Gluconobacter oxydans (strain 621H) (Gluconobacter suboxydans), this protein is Glutamate--tRNA ligase 1.